A 438-amino-acid polypeptide reads, in one-letter code: sn-glycerol-3-phosphate-binding periplasmic protein UgpB (438 aa).

The signal sequence occupies residues 1–23 (MKPLHYTASALALGLALMGNAQA). Positions 65, 89, 144, 270, 307, 346, and 397 each coordinate sn-glycerol 3-phosphate.

Belongs to the bacterial solute-binding protein 1 family. The complex is composed of two ATP-binding proteins (UgpC), two transmembrane proteins (UgpA and UgpE) and a solute-binding protein (UgpB).

It localises to the periplasm. Its function is as follows. Part of the ABC transporter complex UgpBAEC involved in sn-glycerol-3-phosphate (G3P) import. Binds G3P. This chain is sn-glycerol-3-phosphate-binding periplasmic protein UgpB (ugpB), found in Shigella dysenteriae serotype 1 (strain Sd197).